A 476-amino-acid polypeptide reads, in one-letter code: ATP synthase subunit beta (476 aa).

An ATP-binding site is contributed by Gly161 to Thr168.

This sequence belongs to the ATPase alpha/beta chains family. F-type ATPases have 2 components, CF(1) - the catalytic core - and CF(0) - the membrane proton channel. CF(1) has five subunits: alpha(3), beta(3), gamma(1), delta(1), epsilon(1). CF(0) has three main subunits: a(1), b(2) and c(9-12). The alpha and beta chains form an alternating ring which encloses part of the gamma chain. CF(1) is attached to CF(0) by a central stalk formed by the gamma and epsilon chains, while a peripheral stalk is formed by the delta and b chains.

The protein resides in the cell membrane. It catalyses the reaction ATP + H2O + 4 H(+)(in) = ADP + phosphate + 5 H(+)(out). In terms of biological role, produces ATP from ADP in the presence of a proton gradient across the membrane. The catalytic sites are hosted primarily by the beta subunits. This chain is ATP synthase subunit beta, found in Mycolicibacterium gilvum (strain PYR-GCK) (Mycobacterium gilvum (strain PYR-GCK)).